We begin with the raw amino-acid sequence, 255 residues long: Indole-3-glycerol phosphate synthase (255 aa).

It belongs to the TrpC family.

The catalysed reaction is 1-(2-carboxyphenylamino)-1-deoxy-D-ribulose 5-phosphate + H(+) = (1S,2R)-1-C-(indol-3-yl)glycerol 3-phosphate + CO2 + H2O. The protein operates within amino-acid biosynthesis; L-tryptophan biosynthesis; L-tryptophan from chorismate: step 4/5. This is Indole-3-glycerol phosphate synthase from Streptococcus sanguinis (strain SK36).